The primary structure comprises 1173 residues: MPASFVHLRLHTEYSLVDGLVRIKPLVKALTGMGMPAVAVTDQNNMCSLVKFYKNAMGAGIKPICGADLWLSNKDPDGPLSRISLLVMNAQGYRNLTELISRGFIDGQRNGMVIIEREWVAEANEGLIMLSAAKEGEIGMAMIGGNPAEAEALAREWMAVFPDRFYLEIQRTNRPNDEEQLHGAVALADKLGAPLVATNDVRFIKQEDFAAHETRVCIGEGRALDDPRRSKNYSDQQYLKSAEEMAELFSDLPDAIENTVEIAKRCNIDVKLGKHFLPDYPIPDGMTIDEYFRKVSFDGLEERLSVLLPKDTTEDYEAKRQVYVDRLNFELDIIIQMGFPGYFLIVMDFIQWAKNNGVPVGPGRGSGAGSLVAYVQKITDLDPLEYDLLFERFLNPERVSMPDFDVDFCMDGRDRVIDYVAEKYGRNAVSQIITFGSMAAKAVVRDVARAQGKSFGLADRLSKMVPFEVGMTLEKAYEQEEILRDFIKVDEEAAEIWEMARKLEGVVRNVGKHAGGVVIAPTKLTDFSPIYCDEAGDGLVTQFDKDDVEAAGLVKFDFLGLRTLTIIDWALKTINRDRAKVNEPPLDIAFIPLDDKPTYQLLQKAETTAVFQLESRGMKELIKKLKLDCLEDLIALVALFRPGPLQSGMVDDFINRKHGRAELAYPHPDYQYEGLQPVLAPTYGIILYQEQVMQIAQVMAGYTLGGADMLRRAMGKKKPEEMAKQRGGFIEGCASNNIDADLAGNIFDLVEKFAGYGFNKSHSAAYGLVSYQTAWLKAHYPAPFMAAVLSADMHNTDKVVTLIEEVRTMKLRLDAPDVNTSEFKFTVNDEGRIVYGLGAIKGVGEGPVEAITEARQAGPFKDLFDFCARVDLKRINKRTLDGLIRSGALDRLGPYFHDEQKAYQANIDRNRAVLLAAMEEAIKSAEQTARTRDSGHADLFGGLFVEEDADVYAIHRKAKELTLKERLKGEKDTLGLYLTGHPIDEYEGEIRRFARQRIIDLKPARDTQTVAGMIIALRVMKNKKGDKMGFITLDDRSGRIEASLFADAFHSAQSLLQTDAMVVVEGEVSNDDFSGGLRLRVKRVMSMEDARTNLAESLRLKLQTQDLKGDQLRWLGDLLKRHRGACPITMEYTSPDAKTLLQFGETWRIDPADALIQALRDQFGRDNVFLQYR.

It belongs to the DNA polymerase type-C family. DnaE subfamily. DNA polymerase III contains a core (composed of alpha, epsilon and theta chains) that associates with a tau subunit. This core dimerizes to form the PolIII' complex. PolIII' associates with the gamma complex (composed of gamma, delta, delta', psi and chi chains) and with the beta chain to form the complete DNA polymerase III complex.

The protein resides in the cytoplasm. It carries out the reaction DNA(n) + a 2'-deoxyribonucleoside 5'-triphosphate = DNA(n+1) + diphosphate. DNA polymerase III is a complex, multichain enzyme responsible for most of the replicative synthesis in bacteria. This DNA polymerase also exhibits 3' to 5' exonuclease activity. The alpha chain is the DNA polymerase. The sequence is that of DNA polymerase III subunit alpha (dnaE) from Pseudomonas fluorescens.